A 260-amino-acid polypeptide reads, in one-letter code: UPF0246 protein Mmwyl1_3597 (260 aa).

It belongs to the UPF0246 family.

The chain is UPF0246 protein Mmwyl1_3597 from Marinomonas sp. (strain MWYL1).